The chain runs to 279 residues: Large ribosomal subunit protein uL2 (279 aa).

Disordered stretches follow at residues 29-59 and 224-279; these read PEKS…GGHK and VAMN…KNKR. Residues 50-59 show a composition bias toward basic residues; that stretch reads TTRHKGGGHK. Over residues 253–268 the composition is skewed to basic and acidic residues; that stretch reads PEGRTRRPNKESDKLI. The segment covering 269–279 has biased composition (basic residues); the sequence is VRRRRTGKNKR.

This sequence belongs to the universal ribosomal protein uL2 family. In terms of assembly, part of the 50S ribosomal subunit. Forms a bridge to the 30S subunit in the 70S ribosome.

One of the primary rRNA binding proteins. Required for association of the 30S and 50S subunits to form the 70S ribosome, for tRNA binding and peptide bond formation. It has been suggested to have peptidyltransferase activity; this is somewhat controversial. Makes several contacts with the 16S rRNA in the 70S ribosome. This is Large ribosomal subunit protein uL2 from Paenarthrobacter aurescens (strain TC1).